The sequence spans 253 residues: Triosephosphate isomerase (253 aa).

Asn9 to Lys11 contacts substrate. The active-site Electrophile is the His95. Glu167 functions as the Proton acceptor in the catalytic mechanism. Residues Gly173, Ser213, and Gly234 to Gly235 each bind substrate. Ser213 carries the post-translational modification Phosphoserine.

It belongs to the triosephosphate isomerase family. As to quaternary structure, homodimer.

The protein resides in the cytoplasm. It carries out the reaction D-glyceraldehyde 3-phosphate = dihydroxyacetone phosphate. Its pathway is carbohydrate biosynthesis; gluconeogenesis. It participates in carbohydrate degradation; glycolysis; D-glyceraldehyde 3-phosphate from glycerone phosphate: step 1/1. In terms of biological role, involved in the gluconeogenesis. Catalyzes stereospecifically the conversion of dihydroxyacetone phosphate (DHAP) to D-glyceraldehyde-3-phosphate (G3P). The chain is Triosephosphate isomerase from Bacillus licheniformis (strain ATCC 14580 / DSM 13 / JCM 2505 / CCUG 7422 / NBRC 12200 / NCIMB 9375 / NCTC 10341 / NRRL NRS-1264 / Gibson 46).